The chain runs to 255 residues: MTSADPLAALADNYIWMARDASGTTAFAVDPGDAAVVEAWLHDHQLRLAAVLVTHHHGDHTGGVAELAERHRVPVFGPATETIPTVDHPITGGEHFSLEGFGEFRVLDCPGHTAGHIAYLWEGHLFSGDALFAGGCGRVFEGTAGQMHASLQHLAALPADTRVCCGHEYTVKNLEFAHCADPKNDRLAQRLQAARDARAAGQPTVPSTLAEELATNPFLRTDCPELRRAAQDWCGRDLDQAYEVFATLRRWKDTT.

Positions 55, 57, 59, 60, 112, 129, and 167 each coordinate Zn(2+).

It belongs to the metallo-beta-lactamase superfamily. Glyoxalase II family. Monomer. Zn(2+) serves as cofactor.

The catalysed reaction is an S-(2-hydroxyacyl)glutathione + H2O = a 2-hydroxy carboxylate + glutathione + H(+). Its pathway is secondary metabolite metabolism; methylglyoxal degradation; (R)-lactate from methylglyoxal: step 2/2. Thiolesterase that catalyzes the hydrolysis of S-D-lactoyl-glutathione to form glutathione and D-lactic acid. In Halorhodospira halophila (strain DSM 244 / SL1) (Ectothiorhodospira halophila (strain DSM 244 / SL1)), this protein is Hydroxyacylglutathione hydrolase.